A 216-amino-acid polypeptide reads, in one-letter code: UPF0502 protein Ent638_1581 (216 aa).

This sequence belongs to the UPF0502 family.

The polypeptide is UPF0502 protein Ent638_1581 (Enterobacter sp. (strain 638)).